The chain runs to 179 residues: Large ribosomal subunit protein uL5 (179 aa).

It belongs to the universal ribosomal protein uL5 family. Part of the 50S ribosomal subunit; part of the 5S rRNA/L5/L18/L25 subcomplex. Contacts the 5S rRNA and the P site tRNA. Forms a bridge to the 30S subunit in the 70S ribosome.

This is one of the proteins that bind and probably mediate the attachment of the 5S RNA into the large ribosomal subunit, where it forms part of the central protuberance. In the 70S ribosome it contacts protein S13 of the 30S subunit (bridge B1b), connecting the 2 subunits; this bridge is implicated in subunit movement. Contacts the P site tRNA; the 5S rRNA and some of its associated proteins might help stabilize positioning of ribosome-bound tRNAs. This is Large ribosomal subunit protein uL5 from Edwardsiella ictaluri (strain 93-146).